The chain runs to 430 residues: Adenylosuccinate synthetase (430 aa).

GTP is bound by residues glycine 12 to lysine 18 and glycine 40 to threonine 42. Aspartate 13 acts as the Proton acceptor in catalysis. Mg(2+) contacts are provided by aspartate 13 and glycine 40. IMP is bound by residues aspartate 13–lysine 16, asparagine 38–histidine 41, threonine 128, arginine 142, glutamine 223, threonine 238, and arginine 302. Histidine 41 serves as the catalytic Proton donor. Position 298-304 (threonine 298–arginine 304) interacts with substrate. GTP is bound by residues arginine 304, serine 330–aspartate 332, and serine 412–glycine 414.

It belongs to the adenylosuccinate synthetase family. In terms of assembly, homodimer. Requires Mg(2+) as cofactor.

The protein resides in the cytoplasm. It carries out the reaction IMP + L-aspartate + GTP = N(6)-(1,2-dicarboxyethyl)-AMP + GDP + phosphate + 2 H(+). It functions in the pathway purine metabolism; AMP biosynthesis via de novo pathway; AMP from IMP: step 1/2. Its function is as follows. Plays an important role in the de novo pathway of purine nucleotide biosynthesis. Catalyzes the first committed step in the biosynthesis of AMP from IMP. The protein is Adenylosuccinate synthetase of Streptococcus uberis (strain ATCC BAA-854 / 0140J).